Consider the following 380-residue polypeptide: Protein FAM110B (380 aa).

Residues 92 to 272 (ALGSPTLKGF…RPSLQRSKSD (181 aa)) form a disordered region. Over residues 100–110 (GFGGGGGGAKS) the composition is skewed to gly residues. The segment covering 127-138 (ILNSSEGSSTGS) has biased composition (polar residues). Positions 153 to 162 (DAAELHRHSF) are enriched in basic and acidic residues. The span at 239-248 (KVAAPAAVKS) shows a compositional bias: low complexity. Phosphoserine occurs at positions 248 and 311. Residues 327 to 347 (DCEQSQDSNSDLRNDDSANDR) form a disordered region. The segment covering 336–345 (SDLRNDDSAN) has biased composition (basic and acidic residues).

The protein belongs to the FAM110 family.

It is found in the cytoplasm. The protein resides in the cytoskeleton. Its subcellular location is the microtubule organizing center. It localises to the centrosome. The chain is Protein FAM110B (FAM110B) from Bos taurus (Bovine).